An 819-amino-acid polypeptide reads, in one-letter code: Putative U-box domain-containing protein 53 (819 aa).

Disordered regions lie at residues 208 to 309 (TSDT…NPQF) and 398 to 433 (KETE…KEKL). Low complexity predominate over residues 223 to 237 (ERTSSSCSSGSGANS). Polar residues predominate over residues 238–260 (DVMSNALKSNPHTLSNKRMQNLP). Residues 278-296 (DETKKRSSDAAEEASKRSS) are compositionally biased toward basic and acidic residues. A compositionally biased stretch (polar residues) spans 297–307 (PETSRSVSWNP). Residues 395–437 (IAKKETEKFEQKRREEREAAQRREAEMKATHEAKEKEKLEESS) adopt a coiled-coil conformation. Residues 460 to 728 (FSEDLKIGMG…DLEDQILPVL (269 aa)) form the Protein kinase domain. Residues 466–474 (IGMGAYGDV) and Lys487 contribute to the ATP site. Asp582 serves as the catalytic Proton acceptor. The region spanning 748-819 (QPPSHFFCPL…AIVEWRNRNQ (72 aa)) is the U-box domain.

Belongs to the protein kinase superfamily. Ser/Thr protein kinase family.

It carries out the reaction L-seryl-[protein] + ATP = O-phospho-L-seryl-[protein] + ADP + H(+). The catalysed reaction is L-threonyl-[protein] + ATP = O-phospho-L-threonyl-[protein] + ADP + H(+). It catalyses the reaction S-ubiquitinyl-[E2 ubiquitin-conjugating enzyme]-L-cysteine + [acceptor protein]-L-lysine = [E2 ubiquitin-conjugating enzyme]-L-cysteine + N(6)-ubiquitinyl-[acceptor protein]-L-lysine.. The protein operates within protein modification; protein ubiquitination. Functionally, functions as an E3 ubiquitin ligase. The chain is Putative U-box domain-containing protein 53 (PUB53) from Arabidopsis thaliana (Mouse-ear cress).